Here is a 125-residue protein sequence, read N- to C-terminus: Putative oxygen-evolving enhancer protein 2-2 (125 aa).

S15 is subject to Phosphoserine.

The protein belongs to the PsbP family.

This is Putative oxygen-evolving enhancer protein 2-2 (PSBP2) from Arabidopsis thaliana (Mouse-ear cress).